Reading from the N-terminus, the 238-residue chain is D-aminoacyl-tRNA deacylase (238 aa).

It belongs to the DtdA deacylase family. In terms of assembly, monomer. Zn(2+) is required as a cofactor.

It carries out the reaction a D-aminoacyl-tRNA + H2O = a tRNA + a D-alpha-amino acid + H(+). The catalysed reaction is glycyl-tRNA(Ala) + H2O = tRNA(Ala) + glycine + H(+). It catalyses the reaction D-tyrosyl-tRNA(Tyr) + H2O = D-tyrosine + tRNA(Tyr). Its function is as follows. D-aminoacyl-tRNA deacylase with broad substrate specificity. By recycling D-aminoacyl-tRNA to D-amino acids and free tRNA molecules, this enzyme counteracts the toxicity associated with the formation of D-aminoacyl-tRNA entities in vivo. Catalyzes the hydrolysis of D-tyrosyl-tRNA(Tyr). This chain is D-aminoacyl-tRNA deacylase, found in Saccharolobus solfataricus (strain ATCC 35092 / DSM 1617 / JCM 11322 / P2) (Sulfolobus solfataricus).